The primary structure comprises 395 residues: Proteinase-activated receptor 4 (395 aa).

The signal sequence occupies residues 1–16 (MCWPLLYPLMLGFSIS). Positions 17–58 (PAECQTPSIYDDVESTREGQEASLRPTVELNESKSPDKPNPR) are cleaved as a propeptide — removed for receptor activation. Residues 46 to 66 (LNESKSPDKPNPRGFPGKPCA) are disordered. Positions 47–56 (NESKSPDKPN) are enriched in basic and acidic residues. Over 59–93 (GFPGKPCANNSDTLELPASSEALLLGWVPTRLVPA) the chain is Extracellular. A glycan (N-linked (GlcNAc...) asparagine) is linked at Asn67. A helical membrane pass occupies residues 94–114 (IYGLVVVVGLPANGLALWVLA). Over 115 to 119 (TRVPR) the chain is Cytoplasmic. Residues 120-140 (LPSTILLMNLAVADLLLALVL) traverse the membrane as a helical segment. The Extracellular portion of the chain corresponds to 141–161 (PPRLVYHLRGQRWPFGEAACR). The cysteines at positions 160 and 239 are disulfide-linked. Residues 162–182 (VATAALYGHMYGSVLLLAAVS) form a helical membrane-spanning segment. Residues 183-203 (LDRYLALVHSLRARALRGQRL) are Cytoplasmic-facing. The chain crosses the membrane as a helical span at residues 204-224 (TTILCLVAWLSAATLVLPLTF). Residues 225-254 (HRQTFLLAGSDRMLCHDALPLAEQTSHWRP) are Extracellular-facing. Residues 255–275 (AFICLAVLGCFVPLLAMVLCY) form a helical membrane-spanning segment. Residues 276-295 (GATLRALAANGQRYSHAVRL) are Cytoplasmic-facing. Residues 296–316 (TALVLFSAVAAFTPSNVLLVL) traverse the membrane as a helical segment. The Extracellular segment spans residues 317 to 330 (HYSNPSPEAWGNLY). Residues 331 to 354 (GAYVPSLALSTLNSCVDPFIYYYV) traverse the membrane as a helical segment. Residues 355-395 (SHEFREKVRAMLCRQLKASSSSQASREAGSRGTAICSSTLL) are Cytoplasmic-facing.

It belongs to the G-protein coupled receptor 1 family. Post-translationally, a proteolytic cleavage generates a new N-terminus that functions as a tethered ligand.

It is found in the cell membrane. Receptor for activated thrombin or trypsin coupled to G proteins that stimulate phosphoinositide hydrolysis. May play a role in platelets activation. This Rattus norvegicus (Rat) protein is Proteinase-activated receptor 4 (F2rl3).